The sequence spans 162 residues: Phospholipase A and acyltransferase 3 (162 aa).

Topologically, residues 1 to 133 are cytoplasmic; it reads MLAPIPEPKP…VPRSDQVRDA (133 aa). One can recognise an LRAT domain in the interval 13-129; sequence LIEIFRPMYR…LRYGVPRSDQ (117 aa). Residues His23 and His35 contribute to the active site. The Acyl-thioester intermediate role is filled by Cys113. Residues 134 to 154 traverse the membrane as a helical segment; that stretch reads VKAVGIAGVGLAALGLVGVML. Residues 155 to 162 are Lumenal-facing; sequence SRNKKQKQ.

The protein belongs to the H-rev107 family. Interacts with PPP2R1A; this interaction might decrease PP2A activity. As to expression, ubiquitously expressed in normal tissues but down-regulated in primary carcinomas or in many cell lines derived from tumors. Highly expressed in white adipose tissue and in adipocytes. Expressed at lower levels in brown adipose tissue.

The protein localises to the cell membrane. Its subcellular location is the cytoplasm. It localises to the cytosol. The protein resides in the perinuclear region. It is found in the peroxisome membrane. The protein localises to the mitochondrion membrane. Its subcellular location is the nucleus envelope. It localises to the lysosome membrane. The protein resides in the endoplasmic reticulum membrane. The catalysed reaction is a 1,2-diacyl-sn-glycero-3-phosphocholine + H2O = a 1-acyl-sn-glycero-3-phosphocholine + a fatty acid + H(+). It catalyses the reaction a 1,2-diacyl-sn-glycero-3-phosphocholine + H2O = a 2-acyl-sn-glycero-3-phosphocholine + a fatty acid + H(+). It carries out the reaction 1,2-dihexadecanoyl-sn-glycero-3-phosphocholine + H2O = 1-hexadecanoyl-sn-glycero-3-phosphocholine + hexadecanoate + H(+). The enzyme catalyses 1,2-dihexadecanoyl-sn-glycero-3-phosphocholine + H2O = 2-hexadecanoyl-sn-glycero-3-phosphocholine + hexadecanoate + H(+). The catalysed reaction is 1-hexadecanoyl-2-(9Z-octadecenoyl)-sn-glycero-3-phosphocholine + H2O = 2-(9Z-octadecenoyl)-sn-glycero-3-phosphocholine + hexadecanoate + H(+). It catalyses the reaction 1-hexadecanoyl-2-(9Z-octadecenoyl)-sn-glycero-3-phosphocholine + H2O = 1-hexadecanoyl-sn-glycero-3-phosphocholine + (9Z)-octadecenoate + H(+). It carries out the reaction 1-hexadecanoyl-2-(5Z,8Z,11Z,14Z-eicosatetraenoyl)-sn-glycero-3-phosphocholine + H2O = 1-hexadecanoyl-sn-glycero-3-phosphocholine + (5Z,8Z,11Z,14Z)-eicosatetraenoate + H(+). The enzyme catalyses 1-hexadecanoyl-2-(5Z,8Z,11Z,14Z-eicosatetraenoyl)-sn-glycero-3-phosphocholine + H2O = 2-(5Z,8Z,11Z,14Z)-eicosatetraenoyl-sn-glycero-3-phosphocholine + hexadecanoate + H(+). The catalysed reaction is 1-hexadecanoyl-2-(9Z,12Z-octadecadienoyl)-sn-glycero-3-phosphoethanolamine + H2O = 1-hexadecanoyl-sn-glycero-3-phosphoethanolamine + (9Z,12Z)-octadecadienoate + H(+). It catalyses the reaction 1-hexadecanoyl-2-(9Z,12Z-octadecadienoyl)-sn-glycero-3-phosphoethanolamine + H2O = 2-(9Z,12Z)-octadecadienoyl-sn-glycero-3-phosphoethanolamine + hexadecanoate + H(+). It carries out the reaction 1-hexadecanoyl-2-(5Z,8Z,11Z,14Z-eicosatetraenoyl)-sn-glycero-3-phosphoethanolamine + H2O = 1-hexadecanoyl-sn-glycero-3-phosphoethanolamine + (5Z,8Z,11Z,14Z)-eicosatetraenoate + H(+). The enzyme catalyses 1-hexadecanoyl-2-(5Z,8Z,11Z,14Z-eicosatetraenoyl)-sn-glycero-3-phosphoethanolamine + H2O = 2-(5Z,8Z,11Z,14Z)-eicosatetraenoyl-sn-glycero-3-phosphoethanolamine + hexadecanoate + H(+). The catalysed reaction is 1-hexanoyl-2-acyl-sn-glycero-3-phosphocholine + H2O = hexanoate + a 2-acyl-sn-glycero-3-phosphocholine + H(+). It catalyses the reaction 1-hexanoyl-2-acyl-sn-glycero-3-phosphocholine + H2O = 1-hexanoyl-sn-glycero-3-phosphocholine + a fatty acid + H(+). It carries out the reaction 1,2-diheptadecanoyl-sn-glycero-3-phosphoethanolamine + 1-(9Z-octadecenoyl)-2-hexadecanoyl-sn-glycero-3-phosphocholine = 1,2-diheptadecanoyl-sn-glycero-3-phospho-N-hexadecanoyl-ethanolamine + 1-(9Z-octadecenoyl)-sn-glycero-3-phosphocholine + H(+). The enzyme catalyses 1,2-diheptadecanoyl-sn-glycero-3-phosphoethanolamine + 1-(9Z-octadecenoyl)-2-hexadecanoyl-sn-glycero-3-phosphocholine = 1,2-diheptadecanoyl-sn-glycero-3-phospho-N-(9Z-octadecenoyl)-ethanolamine + 2-hexadecanoyl-sn-glycero-3-phosphocholine + H(+). The catalysed reaction is 1,2-dihexanoyl-sn-glycero-3-phosphoethanolamine + 2-heptanoyl-sn-glycero-3-phosphocholine = hexanoyl-sn-glycero-3-phosphoethanolamine + 1-hexanoyl-2-heptanoyl-sn-glycero-3-phosphocholine. It catalyses the reaction 1-hexadecanoyl-2-octadecanoyl-sn-glycero-3-phosphocholine + H2O = octadecanoate + 1-hexadecanoyl-sn-glycero-3-phosphocholine + H(+). It carries out the reaction 1-hexadecanoyl-2-octadecanoyl-sn-glycero-3-phosphocholine + H2O = 2-octadecanoyl-sn-glycero-3-phosphocholine + hexadecanoate + H(+). The enzyme catalyses 1-octadecanoyl-2-hexadecanoyl-sn-glycero-3-phosphocholine + H2O = 1-octadecanoyl-sn-glycero-3-phosphocholine + hexadecanoate + H(+). The catalysed reaction is 1-octadecanoyl-2-hexadecanoyl-sn-glycero-3-phosphocholine + H2O = 2-hexadecanoyl-sn-glycero-3-phosphocholine + octadecanoate + H(+). It catalyses the reaction 1-hexadecanoyl-2-(9Z,12Z-octadecadienoyl)-sn-glycero-3-phosphocholine + H2O = (9Z,12Z)-octadecadienoate + 1-hexadecanoyl-sn-glycero-3-phosphocholine + H(+). It carries out the reaction 1-hexadecanoyl-2-(9Z,12Z-octadecadienoyl)-sn-glycero-3-phosphocholine + H2O = 2-(9Z,12Z-octadecadienoyl)-sn-glycero-3-phosphocholine + hexadecanoate + H(+). The enzyme catalyses 1,2-di-(9Z-octadecenoyl)-sn-glycero-3-phosphocholine + H2O = 2-(9Z-octadecenoyl)-sn-glycero-3-phosphocholine + (9Z)-octadecenoate + H(+). The catalysed reaction is 1,2-dihexadecanoyl-sn-glycero-3-phosphocholine + H2O = hexadecanoyl-sn-glycero-3-phosphocholine + hexadecanoate + H(+). It catalyses the reaction 1,2-di-(9Z-octadecenoyl)-sn-glycero-3-phosphocholine + H2O = 1-(9Z-octadecenoyl)-sn-glycero-3-phosphocholine + (9Z)-octadecenoate + H(+). It carries out the reaction 1,2-di-(9Z-octadecenoyl)-sn-glycero-3-phosphoethanolamine + 1,2-dihexadecanoyl-sn-glycero-3-phosphocholine = hexadecanoyl-sn-glycero-3-phosphocholine + N-hexadecanoyl-1,2-di-(9Z-octadecenoyl)-sn-glycero-3-phosphoethanolamine + H(+). The enzyme catalyses 1,2-di-(9Z,12Z-octadecadienoyl)-sn-glycero-3-phosphocholine + H2O = 1-(9Z,12Z)-octadecadienoyl-sn-glycero-3-phosphocholine + (9Z,12Z)-octadecadienoate + H(+). Its function is as follows. Exhibits both phospholipase A1/2 and acyltransferase activities. Shows phospholipase A1 (PLA1) and A2 (PLA2), catalyzing the calcium-independent release of fatty acids from the sn-1 or sn-2 position of glycerophospholipids. For most substrates, PLA1 activity is much higher than PLA2 activity. Shows O-acyltransferase activity, catalyzing the transfer of a fatty acyl group from glycerophospholipid to the hydroxyl group of lysophospholipid. Shows N-acyltransferase activity,catalyzing the calcium-independent transfer of a fatty acyl group at the sn-1 position of phosphatidylcholine (PC) and other glycerophospholipids to the primary amine of phosphatidylethanolamine (PE), forming N-acylphosphatidylethanolamine (NAPE), which serves as precursor for N-acylethanolamines (NAEs). Exhibits high N-acyltransferase activity and low phospholipase A1/2 activity. Required for complete organelle rupture and degradation that occur during eye lens terminal differentiation, when fiber cells that compose the lens degrade all membrane-bound organelles in order to provide lens with transparency to allow the passage of light. Organelle membrane degradation is probably catalyzed by the phospholipase activity. In terms of biological role, (Microbial infection) Acts as a host factor for picornaviruses: required during early infection to promote viral genome release into the cytoplasm. The protein is Phospholipase A and acyltransferase 3 of Mus musculus (Mouse).